The sequence spans 339 residues: Nicotinate-nucleotide--dimethylbenzimidazole phosphoribosyltransferase (339 aa).

The Proton acceptor role is filled by E306.

Belongs to the CobT family.

It carries out the reaction 5,6-dimethylbenzimidazole + nicotinate beta-D-ribonucleotide = alpha-ribazole 5'-phosphate + nicotinate + H(+). It functions in the pathway nucleoside biosynthesis; alpha-ribazole biosynthesis; alpha-ribazole from 5,6-dimethylbenzimidazole: step 1/2. In terms of biological role, catalyzes the synthesis of alpha-ribazole-5'-phosphate from nicotinate mononucleotide (NAMN) and 5,6-dimethylbenzimidazole (DMB). The polypeptide is Nicotinate-nucleotide--dimethylbenzimidazole phosphoribosyltransferase (Brucella anthropi (strain ATCC 49188 / DSM 6882 / CCUG 24695 / JCM 21032 / LMG 3331 / NBRC 15819 / NCTC 12168 / Alc 37) (Ochrobactrum anthropi)).